The primary structure comprises 473 residues: MNTDTPTFEAQQVVRLRRGDLIRRLLQRDKTPLAILLTAAVVGTVTGLIGVAFEKAVTWVQNLRIGALVQTADYAILVWPLAFILSALLAMVGYFLVRKFAPEAGGSGIPEIEGALEELRPVRWWRVLPVKFVGGMGTLGAGMVLGREGPTVQIGGNIGRMVLDLFRMRSAEARHTLLATGAAAGLSAAFNAPLAGILFIIEEMRPQFRYNLISIKAVFTGVIMSSIVFRIFNGEAPIIEVGKLSNAPVNTLWLYLILGMIFGCVGPLFNHLVLRTQDMFQRFHGGEIKKWVLMGGAIGGLCGILGLIEPEAAGGGFNLIPIAAAGNYSVGLLLFIFIARVLTTLLCFSSGAPGGIFAPMLALGTLLGTAFGMAAAACFPQYHLEAGTFAIAGMGALLAASVRAPLTGIVLVLEMTDNYQLILPMIITCLGATLLAQFMGGKPLYSTILARTLAKQDAEQAAKSQRSVAGENT.

At 1–32 (MNTDTPTFEAQQVVRLRRGDLIRRLLQRDKTP) the chain is on the cytoplasmic side. The chain crosses the membrane as a helical span at residues 33–69 (LAILLTAAVVGTVTGLIGVAFEKAVTWVQNLRIGALV). The Periplasmic portion of the chain corresponds to 70–76 (QTADYAI). The chain crosses the membrane as a helical span at residues 77–100 (LVWPLAFILSALLAMVGYFLVRKF). The Cytoplasmic segment spans residues 101–108 (APEAGGSG). Residues 106–110 (GSGIP) carry the Selectivity filter part_1 motif. Position 107 (Ser107) interacts with chloride. Residues 109 to 116 (IPEIEGAL) constitute an intramembrane region (helical). Over 117-123 (EELRPVR) the chain is Cytoplasmic. Residues 124 to 141 (WWRVLPVKFVGGMGTLGA) form a helical membrane-spanning segment. The Periplasmic portion of the chain corresponds to 142–147 (GMVLGR). The short motif at 146 to 150 (GREGP) is the Selectivity filter part_2 element. Residues 148 to 166 (EGPTVQIGGNIGRMVLDLF) form a helical membrane-spanning segment. The Cytoplasmic segment spans residues 167-176 (RMRSAEARHT). 2 intramembrane regions (helical) span residues 177–189 (LLAT…LSAA) and 193–201 (PLAGILFII). The Cytoplasmic portion of the chain corresponds to 202–214 (EEMRPQFRYNLIS). Residues 215–232 (IKAVFTGVIMSSIVFRIF) form a helical membrane-spanning segment. The Periplasmic portion of the chain corresponds to 233 to 252 (NGEAPIIEVGKLSNAPVNTL). Residues 253–281 (WLYLILGMIFGCVGPLFNHLVLRTQDMFQ) form a helical membrane-spanning segment. At 282 to 287 (RFHGGE) the chain is on the cytoplasmic side. The helical transmembrane segment at 288–309 (IKKWVLMGGAIGGLCGILGLIE) threads the bilayer. At 310–329 (PEAAGGGFNLIPIAAAGNYS) the chain is on the periplasmic side. Residues 330–349 (VGLLLFIFIARVLTTLLCFS) traverse the membrane as a helical segment. The Cytoplasmic portion of the chain corresponds to 350 to 354 (SGAPG). Residues 355 to 359 (GIFAP) carry the Selectivity filter part_3 motif. The chain crosses the membrane as a helical span at residues 355–376 (GIFAPMLALGTLLGTAFGMAAA). Chloride is bound by residues Ile356 and Phe357. The Periplasmic portion of the chain corresponds to 377–386 (ACFPQYHLEA). An intramembrane region (helical) is located at residues 387–401 (GTFAIAGMGALLAAS). Positions 402 to 404 (VRA) form an intramembrane region, note=Loop between two helices. Residues 405-416 (PLTGIVLVLEMT) constitute an intramembrane region (helical). The note=Loop between two helices intramembrane region spans 417 to 421 (DNYQL). A helical transmembrane segment spans residues 422–438 (ILPMIITCLGATLLAQF). Topologically, residues 439–473 (MGGKPLYSTILARTLAKQDAEQAAKSQRSVAGENT) are cytoplasmic. Tyr445 contributes to the chloride binding site.

This sequence belongs to the chloride channel (TC 2.A.49) family. ClcA subfamily. As to quaternary structure, homodimer.

It localises to the cell inner membrane. It carries out the reaction 2 chloride(in) + H(+)(out) = 2 chloride(out) + H(+)(in). Functionally, proton-coupled chloride transporter. Functions as antiport system and exchanges two chloride ions for 1 proton. Probably acts as an electrical shunt for an outwardly-directed proton pump that is linked to amino acid decarboxylation, as part of the extreme acid resistance (XAR) response. The chain is H(+)/Cl(-) exchange transporter ClcA from Citrobacter koseri (strain ATCC BAA-895 / CDC 4225-83 / SGSC4696).